The following is a 955-amino-acid chain: Valine--tRNA ligase (955 aa).

The 'HIGH' region motif lies at 41 to 51; that stretch reads PNITGSLHMGH. The 'KMSKS' region motif lies at 554 to 558; it reads KMSKS. Lysine 557 lines the ATP pocket. Positions 926 to 946 form a coiled coil; that stretch reads QEKNKLLKLNEINLKLSEQIK.

This sequence belongs to the class-I aminoacyl-tRNA synthetase family. ValS type 1 subfamily. Monomer.

Its subcellular location is the cytoplasm. It catalyses the reaction tRNA(Val) + L-valine + ATP = L-valyl-tRNA(Val) + AMP + diphosphate. Catalyzes the attachment of valine to tRNA(Val). As ValRS can inadvertently accommodate and process structurally similar amino acids such as threonine, to avoid such errors, it has a 'posttransfer' editing activity that hydrolyzes mischarged Thr-tRNA(Val) in a tRNA-dependent manner. In Buchnera aphidicola subsp. Acyrthosiphon pisum (strain APS) (Acyrthosiphon pisum symbiotic bacterium), this protein is Valine--tRNA ligase.